The chain runs to 142 residues: uncharacterized protein (142 aa).

A disordered region spans residues 70-94; it reads PKSVSNSKKKKEKAEKGLLRPTTKP. Residues 81–94 show a composition bias toward basic and acidic residues; it reads EKAEKGLLRPTTKP.

This is an uncharacterized protein from Bacillus subtilis (strain 168).